The sequence spans 116 residues: MKIGVVLVLLTVFVVVMSSTSVSAQSDEDECLKETGQMQLNCFPYLTDNRIHTPSFACCSEVYTVGKTYVDCFCQFINNGGPSFGIVVSQKLLDLPELCGVYGACGNGKNFKNTSL.

The first 24 residues, 1-24 (MKIGVVLVLLTVFVVVMSSTSVSA), serve as a signal peptide directing secretion. Cystine bridges form between cysteine 31-cysteine 74, cysteine 42-cysteine 58, and cysteine 59-cysteine 99. Asparagine 107 carries GPI-anchor amidated asparagine lipidation. Positions 108–116 (GKNFKNTSL) are cleaved as a propeptide — removed in mature form. An N-linked (GlcNAc...) asparagine glycan is attached at asparagine 113.

It belongs to the plant LTP family. Expressed in seedlings, preferentially in roots.

It is found in the cell membrane. Functionally, probable lipid transfer protein. The chain is Non-specific lipid transfer protein GPI-anchored 17 from Arabidopsis thaliana (Mouse-ear cress).